The chain runs to 428 residues: Dihydroorotase (428 aa).

Positions 56 and 58 each coordinate Zn(2+). Substrate is bound by residues 58–60 (HLR) and asparagine 90. 3 residues coordinate Zn(2+): aspartate 150, histidine 177, and histidine 230. Residue asparagine 276 coordinates substrate. Aspartate 303 serves as a coordination point for Zn(2+). The active site involves aspartate 303. Histidine 307 is a binding site for substrate.

Belongs to the metallo-dependent hydrolases superfamily. DHOase family. Class I DHOase subfamily. The cofactor is Zn(2+).

It catalyses the reaction (S)-dihydroorotate + H2O = N-carbamoyl-L-aspartate + H(+). It participates in pyrimidine metabolism; UMP biosynthesis via de novo pathway; (S)-dihydroorotate from bicarbonate: step 3/3. Catalyzes the reversible cyclization of carbamoyl aspartate to dihydroorotate. This chain is Dihydroorotase, found in Streptomyces coelicolor (strain ATCC BAA-471 / A3(2) / M145).